Consider the following 380-residue polypeptide: Cytochrome b (380 aa).

4 consecutive transmembrane segments (helical) span residues 33-53 (FGSL…FLAM), 77-98 (WLIR…YLHV), 113-133 (WNIG…GYVL), and 178-198 (FFAF…LHLL). His-83 and His-97 together coordinate heme b. His-182 and His-196 together coordinate heme b. A ubiquinone is bound at residue His-201. 4 consecutive transmembrane segments (helical) span residues 226 to 246 (YKDL…TLFS), 288 to 308 (LGGV…PLLH), 320 to 340 (LTQI…WIGG), and 347 to 367 (FITV…ILIP).

The protein belongs to the cytochrome b family. In terms of assembly, the cytochrome bc1 complex contains 3 respiratory subunits (MT-CYB, CYC1 and UQCRFS1), 2 core proteins (UQCRC1 and UQCRC2) and probably 6 low-molecular weight proteins. Heme b serves as cofactor.

The protein localises to the mitochondrion inner membrane. Functionally, component of the ubiquinol-cytochrome c reductase complex (complex III or cytochrome b-c1 complex) that is part of the mitochondrial respiratory chain. The b-c1 complex mediates electron transfer from ubiquinol to cytochrome c. Contributes to the generation of a proton gradient across the mitochondrial membrane that is then used for ATP synthesis. The chain is Cytochrome b (mt-cyb) from Allocyttus niger (Black oreo dory).